Reading from the N-terminus, the 449-residue chain is MSFTPGKQSSSRASSGNRSGNGILKWADQSDQSRNVQTRGRRVQSKQTATSQQPSGGTVVPYYSWFSGITQFQKGKEFEFAEGQGVPIAPGVPATEAKGYWYRHNRRSFKTADGNQRQLLPRWYFYYLGTGPHAKHQYGTDIDGVFWVASNQADINTPADIVDRDPSSDEAIPTRFPPGTVLPQGYYIEGSGRSAPNSRSTSRAPNRAPSAGSRSRANSGNRTSTPGVTPDMADQIASLVLAKLGKDATKPQQVTKQTAKEVRQKILNKPRQKRSPNKQCTVQQCFGKRGPNQNFGGGEMLKLGTSDPQFPILAELAPTAGAFFFGSRLELAKVQNLSGNPDEPQKDVYELRYNGAIRFDSTLSGFETIMKVLNQNLNAYQHQEDGMMNISPKPQRQRGQKNGQVENDNISVAAPKSRVQQNKSRELTAEDISLLKKMDEPYTEDTSEI.

The tract at residues 1–55 is disordered; sequence MSFTPGKQSSSRASSGNRSGNGILKWADQSDQSRNVQTRGRRVQSKQTATSQQPS. The span at 9–22 shows a compositional bias: low complexity; that stretch reads SSSRASSGNRSGNG. Composition is skewed to polar residues over residues 29-38 and 45-55; these read QSDQSRNVQT and SKQTATSQQPS. Residues 52–194 form an RNA-binding region; it reads QQPSGGTVVP…GYYIEGSGRS (143 aa). One can recognise a CoV N NTD domain in the interval 61–190; that stretch reads PYYSWFSGIT…VLPQGYYIEG (130 aa). Arg106, Arg122, and Arg164 together coordinate RNA. 3 disordered regions span residues 158–231, 266–297, and 387–449; these read PADI…VTPD, ILNK…NFGG, and MMNI…TSEI. Ser167 bears the Phosphoserine; by host mark. Residue Thr174 is modified to Phosphothreonine; by host. Residue Ser191 is modified to Phosphoserine; by host. Composition is skewed to polar residues over residues 194-204 and 212-227; these read SAPNSRSTSRA and GSRS…STPG. Residues 259–384 enclose the CoV N CTD domain; sequence AKEVRQKILN…QNLNAYQHQE (126 aa). Residues 266-276 show a composition bias toward basic residues; the sequence is ILNKPRQKRSP. Residues 266 to 385 form a dimerization region; the sequence is ILNKPRQKRS…NLNAYQHQED (120 aa). Position 391 is a phosphoserine; by host (Ser391). Positions 400–410 are enriched in polar residues; the sequence is QKNGQVENDNI. The span at 423–440 shows a compositional bias: basic and acidic residues; sequence KSRELTAEDISLLKKMDE. Position 424 is a phosphoserine; by host (Ser424). Thr428 bears the Phosphothreonine; by host mark.

Belongs to the betacoronavirus nucleocapsid protein family. Homooligomer. Both monomeric and oligomeric forms interact with RNA. Interacts with protein M. Interacts with NSP3; this interaction serves to tether the genome to the newly translated replicase-transcriptase complex at a very early stage of infection. ADP-ribosylated. The ADP-ribosylation is retained in the virion during infection. In terms of processing, phosphorylated on serine and threonine residues.

It localises to the virion. The protein resides in the host endoplasmic reticulum-Golgi intermediate compartment. It is found in the host Golgi apparatus. In terms of biological role, packages the positive strand viral genome RNA into a helical ribonucleocapsid (RNP) and plays a fundamental role during virion assembly through its interactions with the viral genome and membrane protein M. Plays an important role in enhancing the efficiency of subgenomic viral RNA transcription as well as viral replication. The chain is Nucleoprotein from Sus scrofa (Pig).